A 501-amino-acid polypeptide reads, in one-letter code: Neuronal acetylcholine receptor subunit beta-2 (501 aa).

A signal peptide spans 1–25 (MARCSNSMALLFSFGLLWLCSGVLG). Residues 26–238 (TDTEERLVEH…IIRRKPLFYT (213 aa)) are Extracellular-facing. Asparagine 51 and asparagine 168 each carry an N-linked (GlcNAc...) asparagine glycan. Cysteine 155 and cysteine 169 are disulfide-bonded. The helical transmembrane segment at 239-259 (INLIIPCVLITSLAILVFYLP) threads the bilayer. Over 260-267 (SDCGEKMT) the chain is Cytoplasmic. A helical membrane pass occupies residues 268–288 (LCISVLLALTVFLLLISKIVP). At 289–300 (PTSLDVPLVGKY) the chain is on the extracellular side. The chain crosses the membrane as a helical span at residues 301–321 (LMFTMVLVTFSIVTSVCVLNV). Residues 322-459 (HHRSPTTHTM…WKYVAMVIDR (138 aa)) are Cytoplasmic-facing. A helical transmembrane segment spans residues 460–480 (LFLWIFVFVCVFGTIGMFLQP).

Belongs to the ligand-gated ion channel (TC 1.A.9) family. Acetylcholine receptor (TC 1.A.9.1) subfamily. Beta-2/CHRNB2 sub-subfamily. As to quaternary structure, neuronal AChR is a heteropentamer composed of two different types of subunits: alpha and beta. CHRNB2/Beta-2 subunit can be combined to CHRNA2/alpha-2, CHRNA3/alpha-3 or CHRNA4/alpha-4, CHRNA5/alpha-5, CHRNA6/alpha-6 and CHRNB3/beta-3 to give rise to functional receptors. CHRNA2:CHRNB2 and CHRNA4:CHRNB2 nAChR complexes exist in two subtypes: LS (low agonist sensitivity) with a (CHRNA2/4)3:(CHRNB2)2 and HS (high agonist sensitivity) with a (CHRNA2/4)2:(CHRNB2)3 stoichiometry; the subtypes differ in their subunit binding interfaces which are involved in ligand binding. Cells produce predominantly an (CHRNA4)3:(CHRNB2)2 nAChR. The stoichiometric form (CHRNA4)2:(CHRNB2)3 expression is selectively up-regulated by nicotine and has lower single channel conductance and calcium permeability. Also part of the stoichiometric forms: (CHRNA4:CHRNB2)2:CHRNB3 or (CHRNA6:CHRNB2)2:CHRNB3. Can form heteropentamers with CHRNA7, mainly found in basal forebrain cholinergic neurons. Interacts with RIC3; which is required for proper folding and assembly. Interacts with LYPD6.

The protein resides in the synaptic cell membrane. It is found in the cell membrane. The catalysed reaction is K(+)(in) = K(+)(out). The enzyme catalyses Na(+)(in) = Na(+)(out). It carries out the reaction Ca(2+)(in) = Ca(2+)(out). Its activity is regulated as follows. Activated by a myriad of ligands such as acetylcholine, cytisine, nicotine, choline and epibatidine. Channel potentiation by calcium is stoichiometry-selective, CHRNA4:CHRNB2 nACh receptor is achieved by calcium association with topographically distinct sites framed by anionic residues within the CHRNA4 subunit and between the CHRNA4 and CHRNB2 subunits. Oligomeric amyloid-beta protein 42 activates specifially CHRNA7:CHRNB2 nAchRs. nAChR activity is inhibited by the antagonist alpha-conotoxins BuIA, PnIA, PnIC, GID and MII, small disulfide-constrained peptides from cone snails. Functionally, component of neuronal acetylcholine receptors (nAChRs) that function as pentameric, ligand-gated cation channels with high calcium permeability among other activities. nAChRs are excitatory neurotrasnmitter receptors formed by a collection of nAChR subunits known to mediate synaptic transmission in the nervous system and the neuromuscular junction. Each nAchR subunit confers differential attributes to channel properties, including activation, deactivation and desensitization kinetics, pH sensitivity, cation permeability, and binding to allosteric modulators. CHRNB2 forms heteropentameric neuronal acetylcholine receptors with CHRNA2, CHRNA3, CHRNA4 and CHRNA6, as well as CHRNA5 and CHRNB3 as accesory subunits. Found in two major stoichiometric forms,(CHRNA4)3:(CHRNB2)2 and (CHRNA4)2:(CHRNB2)3, the two stoichiometric forms differ in their unitary conductance, calcium permeability, ACh sensitivity and potentiation by divalent cation. Heteropentameric channels with CHRNA6 and CHRNA4 exhibit high sensitivity to ACh and nicotine and are predominantly expressed in only a few brain areas, including dopaminergic neurons, norepirephrine neurons and cells of the visual system. nAChrs containing CHRNA6 subunits mediate endogenous cholinergic modulation of dopamine and gamma-aminobutyric acid (GABA) release in response to nicotine at nerve terminals. Also forms functional nAChRs with other subunits such as CHRNA7:CHRNB2, mainly expressed in basal forebrain cholinergic neurons. The chain is Neuronal acetylcholine receptor subunit beta-2 (Chrnb2) from Mus musculus (Mouse).